Consider the following 87-residue polypeptide: Lipid-anchored plasma membrane protein uvi15 (87 aa).

Positions 1–64 are disordered; the sequence is MSAQQFYGDK…MYVQQPQASD (64 aa). The segment covering 18-41 has biased composition (low complexity); sequence QQAYGGPNYYPPQQNYPQQGYAPP.

It belongs to the CYSTM1 family. Palmitoylated.

The protein resides in the cell membrane. It is found in the cell tip. Required for the maintenance of viability of cells in stationary phase and in starvation conditions. This Schizosaccharomyces pombe (strain 972 / ATCC 24843) (Fission yeast) protein is Lipid-anchored plasma membrane protein uvi15 (uvi15).